The following is a 688-amino-acid chain: Elongation factor G (688 aa).

A tr-type G domain is found at 6 to 280; sequence KLFRNFGIMA…AVVDFLPSPI (275 aa). GTP-binding positions include 15-22, 79-83, and 133-136; these read AHIDAGKT, DTPGH, and NKMD.

The protein belongs to the TRAFAC class translation factor GTPase superfamily. Classic translation factor GTPase family. EF-G/EF-2 subfamily.

The protein localises to the cytoplasm. Its function is as follows. Catalyzes the GTP-dependent ribosomal translocation step during translation elongation. During this step, the ribosome changes from the pre-translocational (PRE) to the post-translocational (POST) state as the newly formed A-site-bound peptidyl-tRNA and P-site-bound deacylated tRNA move to the P and E sites, respectively. Catalyzes the coordinated movement of the two tRNA molecules, the mRNA and conformational changes in the ribosome. In Ureaplasma parvum serovar 3 (strain ATCC 27815 / 27 / NCTC 11736), this protein is Elongation factor G.